The chain runs to 301 residues: MAAPFDPFPAFEEYAHPERIVSASWLSARLGSPGLKVVESNEDSLLYDIGHLPGAVRIDWAKDLNDPLTRDFIDGEAFAELMNRKGIARDDTVVVYGDKSNWWAAFTLWVFELFGHSDVRLLNGGRDAWMAEERDTSYVVPEYPSANYPVVERVDENQRAFVAEVLGSLTQSGGMTLVDVRTPSEFSGLDEHGNPTSNTGVLRGGHIPGAINLDWSDAVLPNGNFRTRAELDKLYADLNPADDTVVYCQVGDRAAHTWFVLKYLLGFNNVRNYDGSWAEWGNMVRMPIETGENTKNNVSVS.

2 Rhodanese domains span residues 31–138 (GSPG…DTSY) and 171–289 (QSGG…MPIE). The active-site Cysteine persulfide intermediate is Cys-248. Arg-253 is a binding site for substrate.

It catalyses the reaction thiosulfate + hydrogen cyanide = thiocyanate + sulfite + 2 H(+). In Corynebacterium glutamicum (strain ATCC 13032 / DSM 20300 / JCM 1318 / BCRC 11384 / CCUG 27702 / LMG 3730 / NBRC 12168 / NCIMB 10025 / NRRL B-2784 / 534), this protein is Thiosulfate sulfurtransferase (thtR).